A 258-amino-acid polypeptide reads, in one-letter code: Thiazole synthase 1 (258 aa).

Lys-97 acts as the Schiff-base intermediate with DXP in catalysis. Residues Gly-158, 184–185 (AG), and 206–207 (NT) each bind 1-deoxy-D-xylulose 5-phosphate.

This sequence belongs to the ThiG family. Homotetramer. Forms heterodimers with either ThiH or ThiS.

The protein resides in the cytoplasm. The catalysed reaction is [ThiS sulfur-carrier protein]-C-terminal-Gly-aminoethanethioate + 2-iminoacetate + 1-deoxy-D-xylulose 5-phosphate = [ThiS sulfur-carrier protein]-C-terminal Gly-Gly + 2-[(2R,5Z)-2-carboxy-4-methylthiazol-5(2H)-ylidene]ethyl phosphate + 2 H2O + H(+). It participates in cofactor biosynthesis; thiamine diphosphate biosynthesis. In terms of biological role, catalyzes the rearrangement of 1-deoxy-D-xylulose 5-phosphate (DXP) to produce the thiazole phosphate moiety of thiamine. Sulfur is provided by the thiocarboxylate moiety of the carrier protein ThiS. In vitro, sulfur can be provided by H(2)S. The sequence is that of Thiazole synthase 1 from Syntrophotalea carbinolica (strain DSM 2380 / NBRC 103641 / GraBd1) (Pelobacter carbinolicus).